Here is an 858-residue protein sequence, read N- to C-terminus: Bifunctional uridylyltransferase/uridylyl-removing enzyme (858 aa).

The tract at residues M1–L324 is uridylyltransferase. The tract at residues S325–L681 is uridylyl-removing. An HD domain is found at V443 to L565. ACT domains follow at residues Q682–G763 and I790–V858.

Belongs to the GlnD family. It depends on Mg(2+) as a cofactor.

It carries out the reaction [protein-PII]-L-tyrosine + UTP = [protein-PII]-uridylyl-L-tyrosine + diphosphate. It catalyses the reaction [protein-PII]-uridylyl-L-tyrosine + H2O = [protein-PII]-L-tyrosine + UMP + H(+). Its activity is regulated as follows. Uridylyltransferase (UTase) activity is inhibited by glutamine, while glutamine activates uridylyl-removing (UR) activity. In terms of biological role, modifies, by uridylylation and deuridylylation, the PII regulatory proteins (GlnB and homologs), in response to the nitrogen status of the cell that GlnD senses through the glutamine level. Under low glutamine levels, catalyzes the conversion of the PII proteins and UTP to PII-UMP and PPi, while under higher glutamine levels, GlnD hydrolyzes PII-UMP to PII and UMP (deuridylylation). Thus, controls uridylylation state and activity of the PII proteins, and plays an important role in the regulation of nitrogen assimilation and metabolism. The protein is Bifunctional uridylyltransferase/uridylyl-removing enzyme of Burkholderia orbicola (strain MC0-3).